Here is a 441-residue protein sequence, read N- to C-terminus: MAGUK p55 subfamily member 4 (441 aa).

The 84-residue stretch at M1 to S84 folds into the PDZ domain. The SH3 domain maps to Q91–Q161. The Guanylate kinase-like domain occupies H232–Q421. A coiled-coil region spans residues V373–V430.

Belongs to the MAGUK family. As to quaternary structure, interacts with MPDZ. May interact with GRIA2. Forms a complex with CRB1 and PALS1. Interacts with FASLG. Highly expressed in brain and detected in lung, and bone (at protein level). Also expressed in intestine and spleen.

Its subcellular location is the cytoplasm. May play a role in retinal photoreceptors development. This Rattus norvegicus (Rat) protein is MAGUK p55 subfamily member 4 (Mpp4).